Here is a 344-residue protein sequence, read N- to C-terminus: Heat-inducible transcription repressor HrcA (344 aa).

Belongs to the HrcA family.

Functionally, negative regulator of class I heat shock genes (grpE-dnaK-dnaJ and groELS operons). Prevents heat-shock induction of these operons. This chain is Heat-inducible transcription repressor HrcA, found in Streptococcus pneumoniae (strain ATCC 700669 / Spain 23F-1).